The primary structure comprises 201 residues: Holliday junction resolvase RecU (201 aa).

Threonine 85, aspartate 87, glutamate 100, and glutamine 119 together coordinate Mg(2+).

Belongs to the RecU family. Requires Mg(2+) as cofactor.

Its subcellular location is the cytoplasm. It catalyses the reaction Endonucleolytic cleavage at a junction such as a reciprocal single-stranded crossover between two homologous DNA duplexes (Holliday junction).. Functionally, endonuclease that resolves Holliday junction intermediates in genetic recombination. Cleaves mobile four-strand junctions by introducing symmetrical nicks in paired strands. Promotes annealing of linear ssDNA with homologous dsDNA. Required for DNA repair, homologous recombination and chromosome segregation. The chain is Holliday junction resolvase RecU from Geobacillus thermodenitrificans (strain NG80-2).